The following is a 123-amino-acid chain: uncharacterized protein (123 aa).

The interval 34 to 123 (PEKISQTVKK…MNRDGGVKKE (90 aa)) is disordered. Basic and acidic residues-rich tracts occupy residues 50 to 60 (KKIDENKDKSP), 74 to 100 (TAKD…EFSQ), and 107 to 123 (EETR…VKKE).

It localises to the mitochondrion. This is an uncharacterized protein from Schizosaccharomyces pombe (strain 972 / ATCC 24843) (Fission yeast).